Here is a 371-residue protein sequence, read N- to C-terminus: Protein SPATA31F3 (371 aa).

Residues Ile7 to Trp29 traverse the membrane as a helical segment. Residues Leu62 to Gln86 are a coiled coil. Polar residues-rich tracts occupy residues Leu189–Gln203 and Pro244–Ser266. Disordered regions lie at residues Leu189–Gln222, Tyr240–Met299, and Tyr326–Ile371. 2 positions are modified to phosphoserine: Ser197 and Ser198. Positions Gln277–Val287 are enriched in basic residues. Residues Thr330–Ala362 show a composition bias toward basic and acidic residues.

Belongs to the SPATA31 family.

The protein localises to the membrane. The polypeptide is Protein SPATA31F3 (Spata31f3) (Mus musculus (Mouse)).